The primary structure comprises 694 residues: Junctophilin-2 (694 aa).

Residues 1–672 (MSGGRFDFDD…EVEVEEVPNT (672 aa)) are Cytoplasmic-facing. MORN repeat units follow at residues 14 to 36 (YCGGWEGGKAHGHGLCTGPKGQG), 38 to 59 (YSGSWNFGFEVAGVYTWPSGNT), 60 to 79 (FEGYWSQGKRHGLGIETKGR), 82 to 104 (YKGEWTHGFKGRYGTRQSTSSGA), 106 to 128 (YEGTWNNGLQDGYGTETYADGGT), and 129 to 151 (YQGQFTNGMRHGYGVRQSVPYGM). Ser-162 and Ser-165 each carry phosphoserine. Disordered regions lie at residues 164–192 (SSLRSEHSNGTVAPDSPASPAADGPALPS) and 231–278 (RAES…AAPF). Residues 176-189 (APDSPASPAADGPA) show a composition bias toward low complexity. A compositionally biased stretch (polar residues) spans 235-244 (RTSVGSQRSR). The segment covering 250 to 267 (SDLSSGASDAASTASLGE) has biased composition (low complexity). MORN repeat units lie at residues 290 to 312 (YMGEWKNDKRSGFGVSERSSGLR) and 313 to 335 (YEGEWLDNLRHGYGCTTLPDGHR). The Bipartite nuclear localization signal signature appears at 350-364 (KRRVLPLKSNKVRQK). Phosphoserine is present on residues Ser-445, Ser-447, and Ser-466. Residues 448–663 (LLEPPDRGAA…KEAAQAAEAE (216 aa)) are disordered. Residues 467–476 (PQLHERETPR) show a composition bias toward basic and acidic residues. The residue at position 474 (Thr-474) is a Phosphothreonine. Pro residues predominate over residues 478–491 (EGGPPSPAGTPPQP). Ser-483 bears the Phosphoserine mark. At Thr-487 the chain carries Phosphothreonine. The Nuclear localization signal motif lies at 492-496 (KRPRP). Low complexity predominate over residues 522 to 540 (SRPATPAAAGAGRRSPARP). Phosphoserine occurs at positions 536, 542, 596, and 600. Positions 589–610 (PEAADPDSAPASPATAPGQAPA) are enriched in low complexity. The helical; Anchor for type IV membrane protein transmembrane segment at 673–693 (VLICMVILLNIGLAILFVHLL) threads the bilayer.

This sequence belongs to the junctophilin family. In terms of assembly, interacts with TRPC3. Interacts with BAG5 and HSPA8; the interaction with HSPA8 is increased in the presence of BAG5. Junctophilin-2 N-terminal fragment: Interacts with MEF2C. Post-translationally, proteolytically cleaved by calpain in response to cardiac stress. The major cleavage site takes place at the C-terminus and leads to the release of the Junctophilin-2 N-terminal fragment chain (JP2NT). Phosphorylation on Ser-165, probably by PKC, affects RYR1-mediated calcium ion release, interaction with TRPC3, and skeletal muscle myotubule development.

The protein localises to the cell membrane. Its subcellular location is the sarcoplasmic reticulum membrane. The protein resides in the endoplasmic reticulum membrane. It localises to the nucleus. In terms of biological role, membrane-binding protein that provides a structural bridge between the plasma membrane and the sarcoplasmic reticulum and is required for normal excitation-contraction coupling in cardiomyocytes. Provides a structural foundation for functional cross-talk between the cell surface and intracellular Ca(2+) release channels by maintaining the 12-15 nm gap between the sarcolemma and the sarcoplasmic reticulum membranes in the cardiac dyads. Necessary for proper intracellular Ca(2+) signaling in cardiac myocytes via its involvement in ryanodine receptor-mediated calcium ion release. Contributes to the construction of skeletal muscle triad junctions. Transcription repressor required to safeguard against the deleterious effects of cardiac stress. Generated following cleavage of the Junctophilin-2 chain by calpain in response to cardiac stress in cardiomyocytes. Following cleavage and release from the membrane, translocates to the nucleus, binds DNA and represses expression of genes implicated in cell growth and differentiation, hypertrophy, inflammation and fibrosis. Modifies the transcription profile and thereby attenuates pathological remodeling in response to cardiac stress. Probably acts by competing with MEF2 transcription factors and TATA-binding proteins. In Oryctolagus cuniculus (Rabbit), this protein is Junctophilin-2 (JPH2).